Reading from the N-terminus, the 76-residue chain is uncharacterized protein (76 aa).

The HTH cro/C1-type domain occupies 15 to 69; sequence VRIVRKEQNLRQDELAGVAGVGLRFIVDLEAGKPTAQIGKVLQVLQTLGCSIDIL. The H-T-H motif DNA-binding region spans 26-45; that stretch reads QDELAGVAGVGLRFIVDLEA.

This is an uncharacterized protein from Sinorhizobium fredii (strain NBRC 101917 / NGR234).